Here is a 238-residue protein sequence, read N- to C-terminus: Sugar fermentation stimulation protein homolog (238 aa).

Belongs to the SfsA family.

This chain is Sugar fermentation stimulation protein homolog, found in Haemophilus influenzae (strain PittGG).